A 147-amino-acid polypeptide reads, in one-letter code: Diuretic hormone 45 (147 aa).

Positions M1–S26 are cleaved as a signal peptide. Residues I27–P84 constitute a propeptide that is removed on maturation. V131 is modified (valine amide). The propeptide occupies G135 to N147.

It belongs to the sauvagine/corticotropin-releasing factor/urotensin I family.

It is found in the secreted. Regulation of fluid secretion. The polypeptide is Diuretic hormone 45 (dh45) (Bombyx mori (Silk moth)).